We begin with the raw amino-acid sequence, 612 residues long: Citryl-spermidine/3,4-dihydroxybenzoyl-citryl-spermidine:spermidine ligase (612 aa).

ATP-binding positions include 282-284, K298, R310, Y390, and E461; that span reads SMR.

The protein belongs to the IucA/IucC family. As to quaternary structure, homodimer.

The enzyme catalyses N(8)-citryl-spermidine + spermidine + ATP = N(8),N'(8)-citryl-bis(spermidine) + AMP + diphosphate + H(+). It carries out the reaction N(1)-(3,4-dihydroxybenzoyl)-N(8)-citryl-spermidine + spermidine + ATP = N(1)-(3,4-dihydroxybenzoyl)-N(8),N'(8)-citryl-bis(spermidine) + AMP + diphosphate + H(+). The protein operates within siderophore biosynthesis; petrobactin biosynthesis. In terms of biological role, involved in the biosynthesis of petrobactin, a catecholate siderophore that functions in both iron acquisition and virulence. Catalyzes the ATP-dependent condensation of spermidine with N(8)-citryl-spermidine or N(1)-(3,4-dihydroxbenzoyl)-N(8)-citryl-spermidine, two intermediates in petrobactin biosynthesis pathway. This is Citryl-spermidine/3,4-dihydroxybenzoyl-citryl-spermidine:spermidine ligase from Bacillus anthracis.